The following is an 89-amino-acid chain: Large ribosomal subunit protein bL27 (89 aa).

The tract at residues 1-20 (MAHKKAGGSSRNGRDSAGQR) is disordered.

Belongs to the bacterial ribosomal protein bL27 family.

The chain is Large ribosomal subunit protein bL27 from Paramagnetospirillum magneticum (strain ATCC 700264 / AMB-1) (Magnetospirillum magneticum).